A 177-amino-acid polypeptide reads, in one-letter code: Nucleoside triphosphate/diphosphate phosphatase (177 aa).

Catalysis depends on Arg-23, which acts as the Proton donor. Mg(2+) is bound by residues Asn-87, Asp-103, Asp-105, Asp-107, Asp-120, and Glu-123.

Belongs to the Ntdp family. Requires Mg(2+) as cofactor.

It carries out the reaction a ribonucleoside 5'-triphosphate + H2O = a ribonucleoside 5'-diphosphate + phosphate + H(+). It catalyses the reaction a ribonucleoside 5'-diphosphate + H2O = a ribonucleoside 5'-phosphate + phosphate + H(+). Its function is as follows. Has nucleoside phosphatase activity towards nucleoside triphosphates and nucleoside diphosphates. In Streptococcus pyogenes serotype M1, this protein is Nucleoside triphosphate/diphosphate phosphatase.